The following is a 605-amino-acid chain: Methyl-CpG-binding domain protein 1 (605 aa).

One can recognise an MBD domain in the interval 1-69; sequence MAEDWLDCPA…TLFDFKQGIL (69 aa). The tract at residues 80 to 123 is disordered; it reads AVASKKRKKPSRPAKTRKRQVGPQSGEVRKEAPRDETKADTDTA. Over residues 83–99 the composition is skewed to basic residues; sequence SKKRKKPSRPAKTRKRQ. The Nuclear localization signal signature appears at 84–88; the sequence is KKRKK. The span at 106 to 120 shows a compositional bias: basic and acidic residues; the sequence is EVRKEAPRDETKADT. Lysine 117 participates in a covalent cross-link: Glycyl lysine isopeptide (Lys-Gly) (interchain with G-Cter in SUMO2). 2 CXXC-type zinc fingers span residues 169-216 and 217-263; these read RMFK…RRCL and RIVE…RRCL. Positions 176, 179, 182, 188, 191, 194, 210, 215, 225, 228, 231, 237, 240, 243, 257, and 262 each coordinate Zn(2+). The interval 269–308 is disordered; the sequence is RRKGGCDSKMAARRRPGAQPLPPPPPSQSPEPTEPHPRAL. Residue lysine 277 forms a Glycyl lysine isopeptide (Lys-Gly) (interchain with G-Cter in SUMO2) linkage. Residues 287–297 are compositionally biased toward pro residues; sequence QPLPPPPPSQS. The residue at position 297 (serine 297) is a Phosphoserine. The CXXC-type 3 zinc finger occupies 330–378; sequence TNRRQNRKCGACAACLRRMDCGRCDFCCDKPKFGGSNQKRQKCRWRQCL. Zn(2+) contacts are provided by cysteine 338, cysteine 341, cysteine 344, cysteine 350, cysteine 353, cysteine 356, cysteine 372, and cysteine 377. 2 positions are modified to phosphoserine: serine 391 and serine 399. The disordered stretch occupies residues 391-451; that stretch reads SESEDGAGSP…EAGGGFVLPP (61 aa). Positions 403–417 are enriched in basic residues; it reads YRRRKRPSSARRHHL. Lysine 422 is covalently cross-linked (Glycyl lysine isopeptide (Lys-Gly) (interchain with G-Cter in SUMO2)). Residues 426–439 show a composition bias toward polar residues; that stretch reads ATRTAQPDHTQAPT. Lysine 440 participates in a covalent cross-link: Glycyl lysine isopeptide (Lys-Gly) (interchain with G-Cter in SUMO2). Glycyl lysine isopeptide (Lys-Gly) (interchain with G-Cter in SUMO2); alternate cross-links involve residues lysine 499 and lysine 538. Positions 520-573 are disordered; it reads VLVPGCPSKAVDPGLPSVKQEPPDPEEDKEENKDDSASKLAPEEEAGGAGTPVI. The transcriptional repression domain (TRD) stretch occupies residues 529–592; sequence AVDPGLPSVK…RFRDTAVWLP (64 aa). Lysine 558 participates in a covalent cross-link: Glycyl lysine isopeptide (Lys-Gly) (interchain with G-Cter in SUMO2).

Interacts with OASL, ATF7IP, ATF7IP2 and BAHD1. Binds CHAF1A and the SUV39H1-CBX5 complex via the MBD domain. Binds MGP via the TRD domain. May be part of the MeCP1 complex. In terms of processing, sumoylated, sumoylation may increase interaction with ATF7IP. Widely expressed.

Its subcellular location is the nucleus. It is found in the nucleus matrix. It localises to the nucleus speckle. The protein localises to the chromosome. In terms of biological role, transcriptional repressor that binds CpG islands in promoters where the DNA is methylated at position 5 of cytosine within CpG dinucleotides. Binding is abolished by the presence of 7-mG that is produced by DNA damage by methylmethanesulfonate (MMS). Acts as transcriptional repressor and plays a role in gene silencing by recruiting ATF7IP, which in turn recruits factors such as the histone methyltransferase SETDB1. Probably forms a complex with SETDB1 and ATF7IP that represses transcription and couples DNA methylation and histone 'Lys-9' trimethylation. Isoform 1 and isoform 2 can also repress transcription from unmethylated promoters. This is Methyl-CpG-binding domain protein 1 from Homo sapiens (Human).